A 341-amino-acid polypeptide reads, in one-letter code: UDP-3-O-acylglucosamine N-acyltransferase (341 aa).

The active-site Proton acceptor is His-241.

This sequence belongs to the transferase hexapeptide repeat family. LpxD subfamily. Homotrimer.

It carries out the reaction a UDP-3-O-[(3R)-3-hydroxyacyl]-alpha-D-glucosamine + a (3R)-hydroxyacyl-[ACP] = a UDP-2-N,3-O-bis[(3R)-3-hydroxyacyl]-alpha-D-glucosamine + holo-[ACP] + H(+). Its pathway is bacterial outer membrane biogenesis; LPS lipid A biosynthesis. Functionally, catalyzes the N-acylation of UDP-3-O-acylglucosamine using 3-hydroxyacyl-ACP as the acyl donor. Is involved in the biosynthesis of lipid A, a phosphorylated glycolipid that anchors the lipopolysaccharide to the outer membrane of the cell. In Mannheimia succiniciproducens (strain KCTC 0769BP / MBEL55E), this protein is UDP-3-O-acylglucosamine N-acyltransferase.